The chain runs to 326 residues: Cytosolic sulfotransferase 7 (326 aa).

Residue 72-77 (KSGTTW) coordinates 3'-phosphoadenylyl sulfate. His-138 serves as the catalytic Proton acceptor. Residues Arg-160, Ser-168, Tyr-226, and 292–294 (RKG) contribute to the 3'-phosphoadenylyl sulfate site.

This sequence belongs to the sulfotransferase 1 family.

The protein resides in the cytoplasm. Sulfotransferase that utilizes 3'-phospho-5'-adenylyl sulfate (PAPS) as sulfonate donor. The protein is Cytosolic sulfotransferase 7 (SOT7) of Arabidopsis thaliana (Mouse-ear cress).